The primary structure comprises 331 residues: Ketol-acid reductoisomerase (NADP(+)) (331 aa).

The region spanning 2–182 (ARLYYDADAN…GGTRAGILET (181 aa)) is the KARI N-terminal Rossmann domain. NADP(+)-binding positions include 25 to 28 (YGSQ), Ser51, Ser53, and 83 to 86 (DEVQ). Residue His108 is part of the active site. Residue Gly134 participates in NADP(+) binding. Residues 183 to 328 (TFREETETDL…KDLRAMFSWL (146 aa)) enclose the KARI C-terminal knotted domain. Asp191, Glu195, Glu227, and Glu231 together coordinate Mg(2+). Ser252 is a binding site for substrate.

The protein belongs to the ketol-acid reductoisomerase family. Requires Mg(2+) as cofactor.

The enzyme catalyses (2R)-2,3-dihydroxy-3-methylbutanoate + NADP(+) = (2S)-2-acetolactate + NADPH + H(+). The catalysed reaction is (2R,3R)-2,3-dihydroxy-3-methylpentanoate + NADP(+) = (S)-2-ethyl-2-hydroxy-3-oxobutanoate + NADPH + H(+). Its pathway is amino-acid biosynthesis; L-isoleucine biosynthesis; L-isoleucine from 2-oxobutanoate: step 2/4. It participates in amino-acid biosynthesis; L-valine biosynthesis; L-valine from pyruvate: step 2/4. Its function is as follows. Involved in the biosynthesis of branched-chain amino acids (BCAA). Catalyzes an alkyl-migration followed by a ketol-acid reduction of (S)-2-acetolactate (S2AL) to yield (R)-2,3-dihydroxy-isovalerate. In the isomerase reaction, S2AL is rearranged via a Mg-dependent methyl migration to produce 3-hydroxy-3-methyl-2-ketobutyrate (HMKB). In the reductase reaction, this 2-ketoacid undergoes a metal-dependent reduction by NADPH to yield (R)-2,3-dihydroxy-isovalerate. The protein is Ketol-acid reductoisomerase (NADP(+)) of Cyanothece sp. (strain PCC 7425 / ATCC 29141).